Here is an 86-residue protein sequence, read N- to C-terminus: Cell division topological specificity factor (86 aa).

Belongs to the MinE family.

In terms of biological role, prevents the cell division inhibition by proteins MinC and MinD at internal division sites while permitting inhibition at polar sites. This ensures cell division at the proper site by restricting the formation of a division septum at the midpoint of the long axis of the cell. This chain is Cell division topological specificity factor, found in Azoarcus sp. (strain BH72).